Reading from the N-terminus, the 1242-residue chain is DNA mismatch repair protein MSH6 (1242 aa).

Polar residues predominate over residues 1 to 11 (MAPATPKTSKT). Residues 1 to 271 (MAPATPKTSK…ATSKSSKFNK (271 aa)) form a disordered region. The span at 18 to 37 (STSSQKKMKQSSLLSFFSKQ) shows a compositional bias: low complexity. The PIP box signature appears at 27–34 (QSSLLSFF). Residues 54-69 (TLENTATDKITKNPQG) are compositionally biased toward polar residues. Residue Ser-102 is modified to Phosphoserine. Positions 103-121 (QEPQSDTMLNSNTTEPKST) are enriched in polar residues. A phosphoserine mark is found at Ser-145 and Ser-150. 2 stretches are compositionally biased toward acidic residues: residues 166-190 (SESD…ADDK) and 198-207 (AEDSGDDDDL). Phosphoserine is present on Ser-201. Polar residues-rich tracts occupy residues 220 to 233 (SYNT…FTRN) and 245 to 270 (PNQA…SKFN). A DNA-binding region spans residues 228–299 (SPFTRNISRD…PKSDPEYDPR (72 aa)). A mispair-binding domain region spans residues 305–421 (SSAWNKFTPF…RELQCILTSG (117 aa)). Phosphothreonine is present on Thr-451. 982 to 989 (GANAAGKS) serves as a coordination point for ATP.

The protein belongs to the DNA mismatch repair MutS family. In terms of assembly, heterodimer consisting of MSH2-MSH6 (MutS alpha). Forms a ternary complex with MutL alpha (MLH1-PMS1). MutS alpha interacts with proliferating cell nuclear antigen (PCNA/POL30). This interaction is disrupted upon binding of MutS alpha to mismatch DNA.

It is found in the nucleus. With respect to regulation, inhibited by Cd(2+). Component of the post-replicative DNA mismatch repair system (MMR). Heterodimerizes with MSH2 to form MutS alpha, which binds to DNA mismatches thereby initiating DNA repair. MSH6 provides substrate-binding and substrate specificity to the complex. When bound, MutS alpha bends the DNA helix and shields approximately 20 base pairs. Acts mainly to repair base-base and single insertion-deletion mismatches that occur during replication, but can also repair longer insertion-deletion loops (IDLs), although with decreasing efficiency as the size of the extrahelical loop increases. After mismatch binding, forms a ternary complex with the MutL alpha heterodimer, which is thought to be responsible for directing the downstream MMR events, including strand discrimination, excision, and resynthesis. ATP binding and hydrolysis by the MutS alpha complex is crucial for MMR. Both subunits bind ATP, but with differing affinities, and their ATPase kinetics are also very different. MSH6 binds and hydrolyzes ATP rapidly, whereas MSH2 catalyzes ATP at a substantially slower rate. Binding to a mismatched base pair suppresses MSH6-catalyzed ATP hydrolysis, but not the activity of MSH2. ATP binding to both subunits is necessary to trigger a change in MutS alpha interaction with mismatched DNA, converting MutS alpha into a sliding clamp capable of hydrolysis-independent movement along DNA, and also facilitates formation of ternary complexes containing MutS and MutL proteins and the mismatch. May also be involved in resolution of recombination intermediates. This Saccharomyces cerevisiae (strain ATCC 204508 / S288c) (Baker's yeast) protein is DNA mismatch repair protein MSH6 (MSH6).